We begin with the raw amino-acid sequence, 383 residues long: Putative glutamate--cysteine ligase 2 (383 aa).

The protein belongs to the glutamate--cysteine ligase type 2 family. YbdK subfamily.

The enzyme catalyses L-cysteine + L-glutamate + ATP = gamma-L-glutamyl-L-cysteine + ADP + phosphate + H(+). Functionally, ATP-dependent carboxylate-amine ligase which exhibits weak glutamate--cysteine ligase activity. This chain is Putative glutamate--cysteine ligase 2, found in Clavibacter sepedonicus (Clavibacter michiganensis subsp. sepedonicus).